A 185-amino-acid polypeptide reads, in one-letter code: AP-3 complex subunit sigma (185 aa).

It belongs to the adaptor complexes small subunit family. In terms of assembly, adaptor protein complex 3 (AP-3) is a heterotetramer composed of 2 large adaptins (APL5 and APL6), a medium adaptin (APM3) and a small adaptin (APS3).

The protein resides in the golgi apparatus. It is found in the cytoplasmic vesicle membrane. Part of the AP-3 complex, an adaptor-related complex which is not clathrin-associated. The complex is associated with the Golgi region as well as more peripheral structures. It facilitates the budding of vesicles from the Golgi membrane and may be directly involved in trafficking to the vacuole. In Eremothecium gossypii (strain ATCC 10895 / CBS 109.51 / FGSC 9923 / NRRL Y-1056) (Yeast), this protein is AP-3 complex subunit sigma (APS3).